Here is a 940-residue protein sequence, read N- to C-terminus: Isoleucine--tRNA ligase (940 aa).

The 'HIGH' region motif lies at 58 to 68; sequence PYANGAIHIGH. Glutamate 564 serves as a coordination point for L-isoleucyl-5'-AMP. A 'KMSKS' region motif is present at residues 605 to 609; it reads KMSKS. Lysine 608 lines the ATP pocket. Zn(2+) is bound by residues cysteine 903, cysteine 906, cysteine 923, and cysteine 926.

This sequence belongs to the class-I aminoacyl-tRNA synthetase family. IleS type 1 subfamily. In terms of assembly, monomer. Zn(2+) is required as a cofactor.

It localises to the cytoplasm. It catalyses the reaction tRNA(Ile) + L-isoleucine + ATP = L-isoleucyl-tRNA(Ile) + AMP + diphosphate. Catalyzes the attachment of isoleucine to tRNA(Ile). As IleRS can inadvertently accommodate and process structurally similar amino acids such as valine, to avoid such errors it has two additional distinct tRNA(Ile)-dependent editing activities. One activity is designated as 'pretransfer' editing and involves the hydrolysis of activated Val-AMP. The other activity is designated 'posttransfer' editing and involves deacylation of mischarged Val-tRNA(Ile). This chain is Isoleucine--tRNA ligase, found in Nitrosococcus oceani (strain ATCC 19707 / BCRC 17464 / JCM 30415 / NCIMB 11848 / C-107).